We begin with the raw amino-acid sequence, 512 residues long: 2,3-bisphosphoglycerate-independent phosphoglycerate mutase (512 aa).

2 residues coordinate Mn(2+): D12 and S62. S62 acts as the Phosphoserine intermediate in catalysis. Substrate contacts are provided by residues H123, 154–155 (RD), R181, R187, 253–256 (RPDR), and K336. 5 residues coordinate Mn(2+): D403, H407, D444, H445, and H462.

The protein belongs to the BPG-independent phosphoglycerate mutase family. In terms of assembly, monomer. It depends on Mn(2+) as a cofactor.

The catalysed reaction is (2R)-2-phosphoglycerate = (2R)-3-phosphoglycerate. It functions in the pathway carbohydrate degradation; glycolysis; pyruvate from D-glyceraldehyde 3-phosphate: step 3/5. Catalyzes the interconversion of 2-phosphoglycerate and 3-phosphoglycerate. This is 2,3-bisphosphoglycerate-independent phosphoglycerate mutase from Aster yellows witches'-broom phytoplasma (strain AYWB).